A 511-amino-acid polypeptide reads, in one-letter code: Lysine--tRNA ligase (511 aa).

Positions Met-1 to Leu-20 are disordered. Positions 422 and 429 each coordinate Mg(2+).

Belongs to the class-II aminoacyl-tRNA synthetase family. In terms of assembly, homodimer. It depends on Mg(2+) as a cofactor.

The protein resides in the cytoplasm. It carries out the reaction tRNA(Lys) + L-lysine + ATP = L-lysyl-tRNA(Lys) + AMP + diphosphate. The polypeptide is Lysine--tRNA ligase (Chlorobium chlorochromatii (strain CaD3)).